A 472-amino-acid chain; its full sequence is 4-O-methyl-glucuronoyl methylesterase 1 (472 aa).

Positions 1–20 are cleaved as a signal peptide; sequence MKSAAYLAALAAVLPAYVNA. The region spanning 21 to 56 is the CBM1 domain; it reads QAQEWGQCGGIGWTGATTCVSGTVCTVLNPYYSQCL. The interval 62–97 is disordered; sequence TAPPPPPPPPTSVSSSSSSSTSSAPPSGPSGTSPTC. The span at 63–72 shows a compositional bias: pro residues; that stretch reads APPPPPPPPT. Over residues 73–96 the composition is skewed to low complexity; it reads SVSSSSSSSTSSAPPSGPSGTSPT. Disulfide bonds link Cys-97–Cys-131, Cys-283–Cys-419, and Cys-315–Cys-391. The short motif at 282 to 287 is the GXSYXG catalytic site motif element; it reads GCSRDG. Ser-284 functions as the Nucleophile in the catalytic mechanism. The substrate site is built by Lys-288, Gln-330, Glu-338, and Trp-382. The Proton donor/acceptor role is filled by His-418. A glycan (N-linked (GlcNAc...) asparagine) is linked at Asn-465.

Belongs to the carbohydrate esterase 15 (CE15) family.

It is found in the secreted. It catalyses the reaction a 4-O-methyl-alpha-D-glucuronosyl ester derivative + H2O = 4-O-methyl-alpha-D-glucuronate derivative + an alcohol + H(+). Glucuronoyl esterase which may play a significant role in biomass degradation, as it is considered to disconnect hemicellulose from lignin through the hydrolysis of the ester bond between 4-O-methyl-D-glucuronic acid residues of glucuronoxylans and aromatic alcohols of lignin. Can hydrolyze benzyl glucuronic acid (BnGlcA), allyl glucuronic acid (allylGlcA) and to a lower degree methyl glucuronic acid (MeGlcA) in vitro. The protein is 4-O-methyl-glucuronoyl methylesterase 1 of Phanerochaete chrysosporium (strain RP-78 / ATCC MYA-4764 / FGSC 9002) (White-rot fungus).